Consider the following 264-residue polypeptide: Thymidylate synthase (264 aa).

Arg21 is a dUMP binding site. (6R)-5,10-methylene-5,6,7,8-tetrahydrofolate is bound at residue His51. 126–127 (RR) contacts dUMP. The Nucleophile role is filled by Cys146. DUMP contacts are provided by residues 166 to 169 (RSCD), Asn177, and 207 to 209 (HLY). Asp169 serves as a coordination point for (6R)-5,10-methylene-5,6,7,8-tetrahydrofolate. Residue Ala263 participates in (6R)-5,10-methylene-5,6,7,8-tetrahydrofolate binding.

It belongs to the thymidylate synthase family. Bacterial-type ThyA subfamily. In terms of assembly, homodimer.

Its subcellular location is the cytoplasm. The catalysed reaction is dUMP + (6R)-5,10-methylene-5,6,7,8-tetrahydrofolate = 7,8-dihydrofolate + dTMP. Its pathway is pyrimidine metabolism; dTTP biosynthesis. Its function is as follows. Catalyzes the reductive methylation of 2'-deoxyuridine-5'-monophosphate (dUMP) to 2'-deoxythymidine-5'-monophosphate (dTMP) while utilizing 5,10-methylenetetrahydrofolate (mTHF) as the methyl donor and reductant in the reaction, yielding dihydrofolate (DHF) as a by-product. This enzymatic reaction provides an intracellular de novo source of dTMP, an essential precursor for DNA biosynthesis. The sequence is that of Thymidylate synthase from Citrobacter koseri (strain ATCC BAA-895 / CDC 4225-83 / SGSC4696).